Here is a 461-residue protein sequence, read N- to C-terminus: Regulatory protein AtoC (461 aa).

The Response regulatory domain occupies 6–120 (RILIVDDEDN…ELNLIVQRAL (115 aa)). A 4-aspartylphosphate modification is found at Asp-55. His-73 bears the Phosphohistidine mark. The Sigma-54 factor interaction domain occupies 145–374 (ILTNSPAMMD…LSNVIERAVV (230 aa)). ATP-binding positions include 173 to 180 (GESGTGKE) and 236 to 245 (ANEGTLLLDE). The segment at residues 433 to 452 (RTRTALMLGISRRALMYKLQ) is a DNA-binding region (H-T-H motif).

Post-translationally, phosphorylated by AtoS. Contains two phosphorylation sites, which are both involved in the transduction of the acetoacetate signal. Asp-55 is probably the primary phosphorylation site, but either both residues can be phosphorylated independently by AtoS or the phosphate group can be transferred between them. The N-terminus is blocked.

Its subcellular location is the cytoplasm. In terms of biological role, member of the two-component regulatory system AtoS/AtoC. In the presence of acetoacetate, AtoS/AtoC stimulates the expression of the atoDAEB operon, leading to short chain fatty acid catabolism and activation of the poly-(R)-3-hydroxybutyrate (cPHB) biosynthetic pathway. Also induces the operon in response to spermidine. Involved in the regulation of motility and chemotaxis, via transcriptional induction of the flagellar regulon. AtoC acts by binding directly to the promoter region of the target genes. In addition to its role as a transcriptional regulator, functions as a post-translational regulator that inhibits polyamine biosynthesis via regulation of ornithine decarboxylase (ODC). The polypeptide is Regulatory protein AtoC (atoC) (Escherichia coli (strain K12)).